The following is a 1067-amino-acid chain: SURP and G-patch domain-containing protein 2 (1067 aa).

Serine 93 bears the Phosphoserine mark. The span at 177–189 (KESRDYDLDHPGE) shows a compositional bias: basic and acidic residues. Positions 177 to 199 (KESRDYDLDHPGEVDSVSRSSGQ) are disordered. Serine 206 carries the phosphoserine modification. Lysine 219 is covalently cross-linked (Glycyl lysine isopeptide (Lys-Gly) (interchain with G-Cter in SUMO2)). The residue at position 265 (threonine 265) is a Phosphothreonine. A phosphoserine mark is found at serine 267 and serine 586. The SURP motif 1 repeat unit spans residues 573-616 (IDQLVMRVIQGRLSPRERTLLLQDPAYWFLSDESSLEYKYYKLK). The segment at 668-767 (SQGPRGLKAK…CPSANMDAKT (100 aa)) is disordered. The segment covering 680 to 691 (TTAQQTSLSSGT) has biased composition (polar residues). Position 740 is a phosphoserine (serine 740). Threonine 744 bears the Phosphothreonine mark. Residues 770 to 813 (TAEKLARFVAQVGPEIEQFSIENSTDNPDLWFLHDQSSSAFKFY) form an SURP motif 2 repeat. Positions 825 to 840 (SFQSTGEAGDSVQSPT) are enriched in polar residues. Disordered regions lie at residues 825 to 944 (SFQS…KSLK) and 967 to 991 (RIAYDRPRGRPIAKKKKPKDMEFSQ). Residue serine 838 is modified to Phosphoserine. Residues 843-856 (KEGKGEPQEGHPEQ) are compositionally biased toward basic and acidic residues. Over residues 866-883 (LPEEEEEDEEESEDEGGE) the composition is skewed to acidic residues. The segment covering 919–931 (ASTPGLSQASSGS) has biased composition (polar residues). The segment covering 975–984 (GRPIAKKKKP) has biased composition (basic residues). The Nuclear localization signal motif lies at 980-985 (KKKKPK). In terms of domain architecture, G-patch spans 996 to 1042 (DKNVGFQMLQKMGWKEGHGLGSLGKGIREPVSVGALSEGEGLGADGP).

Its subcellular location is the nucleus. In terms of biological role, may play a role in mRNA splicing. This chain is SURP and G-patch domain-containing protein 2 (Sugp2), found in Mus musculus (Mouse).